Reading from the N-terminus, the 645-residue chain is UPF0313 protein CLM_0251 (645 aa).

The 272-residue stretch at 295–566 (AIKEVKFSIT…RMQRALLQFS (272 aa)) folds into the Radical SAM core domain. Residues Cys-309, Cys-313, and Cys-316 each contribute to the [4Fe-4S] cluster site. Residues 598–645 (NKPYKKSHKKNNAKNNNNHYNKNNNYNKNKDISKKNKKNSLSKHKKRK) form a disordered region. Positions 600–609 (PYKKSHKKNN) are enriched in basic residues. Low complexity predominate over residues 610–624 (AKNNNNHYNKNNNYN). The span at 632-645 (KNKKNSLSKHKKRK) shows a compositional bias: basic residues.

The protein belongs to the UPF0313 family. It depends on [4Fe-4S] cluster as a cofactor.

This Clostridium botulinum (strain Kyoto / Type A2) protein is UPF0313 protein CLM_0251.